The following is a 437-amino-acid chain: GTPase Der (437 aa).

EngA-type G domains lie at 3–167 (NLVA…KKES) and 176–352 (PRFA…ENRM). Residues 9-16 (GRPNVGKS), 56-60 (DTGGW), 119-122 (NKTD), 182-189 (GRPNAGKS), 229-233 (DTAGI), and 294-297 (NKWD) each bind GTP. Residues 353-437 (IKIPTARLNE…TPINIYIRQK (85 aa)) form the KH-like domain.

It belongs to the TRAFAC class TrmE-Era-EngA-EngB-Septin-like GTPase superfamily. EngA (Der) GTPase family. Associates with the 50S ribosomal subunit.

Functionally, GTPase that plays an essential role in the late steps of ribosome biogenesis. This is GTPase Der from Bacteroides fragilis (strain ATCC 25285 / DSM 2151 / CCUG 4856 / JCM 11019 / LMG 10263 / NCTC 9343 / Onslow / VPI 2553 / EN-2).